The sequence spans 551 residues: Alkaline/neutral invertase CINV1 (551 aa).

An N-acetylmethionine modification is found at Met-1. A phosphoserine mark is found at Ser-11, Ser-14, Ser-44, and Ser-61. The tract at residues 50–74 is disordered; sequence TGYSRHDGIHDSPRGRSVLDTPLSS. Residues 53 to 63 are compositionally biased toward basic and acidic residues; sequence SRHDGIHDSPR. Thr-70 is subject to Phosphothreonine. Ser-547 bears the Phosphoserine mark.

This sequence belongs to the glycosyl hydrolase 100 family. As to quaternary structure, forms homohexamers. Interacts with PIP5K9. Interaction with PIP5K9 represses CINV1 activity. Interacts with GRF1, GRF2, GRF3, GRF4, GRF5, GRF6, GRF7, GRF8 and GRF10; these interactions are dependent of the phosphorylation at Ser-547. Phosphorylated at Ser-547 by CPK3 and CPK21. In terms of tissue distribution, expressed in radicle, hypocotyls, root tips and vascular cylinder, leaf vasculature, shoot stipules, trichomes, stem, stigma apex and base of siliques.

It localises to the cytoplasm. The protein resides in the cytosol. It is found in the nucleus. It catalyses the reaction Hydrolysis of terminal non-reducing beta-D-fructofuranoside residues in beta-D-fructofuranosides.. In terms of biological role, cytosolic invertase that specifically cleaves sucrose into glucose and fructose and is involved in the regulation of multiple tissue development including primary root elongation, root hair growth, leaf and silique development, and floral transition. Is involved in osmotic stress-induced inhibition on lateral root growth by controlling the concentration of hexose in cells. May regulate sugar-mediated root development by controlling sucrose catabolism in root cells. Contributes to carbon partitioning and cellulose biosynthesis in seedlings. This is Alkaline/neutral invertase CINV1 from Arabidopsis thaliana (Mouse-ear cress).